Here is a 456-residue protein sequence, read N- to C-terminus: UDP-N-acetylmuramoylalanine--D-glutamate ligase (456 aa).

119–125 is a binding site for ATP; the sequence is GSNGKTT.

The protein belongs to the MurCDEF family.

Its subcellular location is the cytoplasm. The enzyme catalyses UDP-N-acetyl-alpha-D-muramoyl-L-alanine + D-glutamate + ATP = UDP-N-acetyl-alpha-D-muramoyl-L-alanyl-D-glutamate + ADP + phosphate + H(+). It functions in the pathway cell wall biogenesis; peptidoglycan biosynthesis. In terms of biological role, cell wall formation. Catalyzes the addition of glutamate to the nucleotide precursor UDP-N-acetylmuramoyl-L-alanine (UMA). The sequence is that of UDP-N-acetylmuramoylalanine--D-glutamate ligase from Limosilactobacillus reuteri (strain DSM 20016) (Lactobacillus reuteri).